The primary structure comprises 284 residues: Ribose-5-phosphate isomerase (284 aa).

The protein belongs to the ribose 5-phosphate isomerase family.

The protein localises to the cytoplasm. It catalyses the reaction aldehydo-D-ribose 5-phosphate = D-ribulose 5-phosphate. The protein operates within carbohydrate degradation; pentose phosphate pathway; D-ribose 5-phosphate from D-ribulose 5-phosphate (non-oxidative stage): step 1/1. This is Ribose-5-phosphate isomerase (RKI1) from Lodderomyces elongisporus (strain ATCC 11503 / CBS 2605 / JCM 1781 / NBRC 1676 / NRRL YB-4239) (Yeast).